The sequence spans 375 residues: Peptide chain release factor 1 (375 aa).

Gln237 is modified (N5-methylglutamine). Residues 289 to 299 show a composition bias toward basic and acidic residues; it reads AAREAQERQER. The disordered stretch occupies residues 289-326; sequence AAREAQERQERASQVGSGDRSEKIRTYNYPQNRVTDHR.

It belongs to the prokaryotic/mitochondrial release factor family. Methylated by PrmC. Methylation increases the termination efficiency of RF1.

It localises to the cytoplasm. Functionally, peptide chain release factor 1 directs the termination of translation in response to the peptide chain termination codons UAG and UAA. The sequence is that of Peptide chain release factor 1 (prfA) from Deinococcus radiodurans (strain ATCC 13939 / DSM 20539 / JCM 16871 / CCUG 27074 / LMG 4051 / NBRC 15346 / NCIMB 9279 / VKM B-1422 / R1).